The primary structure comprises 297 residues: Cytosolic Fe-S cluster assembly factor CFD1 (297 aa).

15–22 provides a ligand contact to ATP; it reads GKGGVGKS. [4Fe-4S] cluster-binding residues include Cys-216 and Cys-219.

The protein belongs to the Mrp/NBP35 ATP-binding proteins family. NUBP2/CFD1 subfamily. In terms of assembly, heterotetramer of 2 NBP35 and 2 CFD1 chains. [4Fe-4S] cluster serves as cofactor.

The protein resides in the cytoplasm. Component of the cytosolic iron-sulfur (Fe/S) protein assembly (CIA) machinery. Required for maturation of extramitochondrial Fe-S proteins. The NBP35-CFD1 heterotetramer forms a Fe-S scaffold complex, mediating the de novo assembly of an Fe-S cluster and its transfer to target apoproteins. The sequence is that of Cytosolic Fe-S cluster assembly factor CFD1 from Phaeosphaeria nodorum (strain SN15 / ATCC MYA-4574 / FGSC 10173) (Glume blotch fungus).